Reading from the N-terminus, the 525-residue chain is Probable lipid II flippase MurJ (525 aa).

14 helical membrane passes run 10–30 (LLKS…LGLV), 32–52 (DVVV…FFAN), 100–120 (VLVT…TALF), 140–160 (LASL…FVAL), 171–191 (FAVS…CAWY), 203–223 (LAIG…PFLI), 247–267 (MIPA…DSFV), 285–305 (LLEF…LPAL), 330–350 (FLGI…LMVL), 368–388 (LLAY…APGY), 402–422 (IIAM…YGYV), 423–443 (GLAV…YRGL), 455–475 (TVWF…ALLW), and 495–515 (LTGL…LLGV).

The protein belongs to the MurJ/MviN family.

It localises to the cell inner membrane. The protein operates within cell wall biogenesis; peptidoglycan biosynthesis. Functionally, involved in peptidoglycan biosynthesis. Transports lipid-linked peptidoglycan precursors from the inner to the outer leaflet of the cytoplasmic membrane. The sequence is that of Probable lipid II flippase MurJ from Vibrio cholerae serotype O1 (strain ATCC 39315 / El Tor Inaba N16961).